Here is a 911-residue protein sequence, read N- to C-terminus: Protein translocase subunit SecA (911 aa).

ATP contacts are provided by residues Gln-90, Gly-108–Thr-112, and Asp-515. Residues Cys-891, Cys-893, Cys-902, and His-903 each contribute to the Zn(2+) site.

The protein belongs to the SecA family. Monomer and homodimer. Part of the essential Sec protein translocation apparatus which comprises SecA, SecYEG and auxiliary proteins SecDF-YajC and YidC. Requires Zn(2+) as cofactor.

It is found in the cell inner membrane. The protein resides in the cytoplasm. The enzyme catalyses ATP + H2O + cellular proteinSide 1 = ADP + phosphate + cellular proteinSide 2.. Its function is as follows. Part of the Sec protein translocase complex. Interacts with the SecYEG preprotein conducting channel. Has a central role in coupling the hydrolysis of ATP to the transfer of proteins into and across the cell membrane, serving both as a receptor for the preprotein-SecB complex and as an ATP-driven molecular motor driving the stepwise translocation of polypeptide chains across the membrane. The protein is Protein translocase subunit SecA of Blochmanniella pennsylvanica (strain BPEN).